A 972-amino-acid polypeptide reads, in one-letter code: C-1-tetrahydrofolate synthase, mitochondrial (972 aa).

The N-terminal 55 residues, 1-55, are a transit peptide targeting the mitochondrion; that stretch reads MNVMVSFNQLRNYFLESNSLRPSKWLFQSYGTSSSANILNGKLLARKLQRSVAEE. The interval 56 to 340 is methylenetetrahydrofolate dehydrogenase and cyclohydrolase; the sequence is VQALKAKDRN…DLNPLELKKP (285 aa). Substrate-binding positions include 84 to 88 and 131 to 133; these read YVRMK and VQL. Residues 202–204 and Ser227 contribute to the NADP(+) site; that span reads GRS. Residue 299–303 coordinates substrate; that stretch reads PGGVG. A formyltetrahydrofolate synthetase region spans residues 341-972; that stretch reads VPSDIEIANS…CENGEIVGLS (632 aa). ATP is bound at residue 405–412; the sequence is TPFGEGKS.

It in the N-terminal section; belongs to the tetrahydrofolate dehydrogenase/cyclohydrolase family. In the C-terminal section; belongs to the formate--tetrahydrofolate ligase family. As to quaternary structure, homodimer.

The protein resides in the mitochondrion. It catalyses the reaction (6R)-5,10-methylene-5,6,7,8-tetrahydrofolate + NADP(+) = (6R)-5,10-methenyltetrahydrofolate + NADPH. The catalysed reaction is (6R)-5,10-methenyltetrahydrofolate + H2O = (6R)-10-formyltetrahydrofolate + H(+). It carries out the reaction (6S)-5,6,7,8-tetrahydrofolate + formate + ATP = (6R)-10-formyltetrahydrofolate + ADP + phosphate. It participates in one-carbon metabolism; tetrahydrofolate interconversion. Functionally, mitochondrial isozyme of C-1-tetrahydrofolate synthase. The trifunctional enzyme catalyzes the interconversion of the one-carbon derivatives of tetrahydrofolate (THF) between different oxidation states by the enzymatic activities 10-formyltetrahydrofolate synthetase, 5,lO-methenyltetrahydrofolate cyclohydrolase, and 5,lO-methylenetetrahydrofolate dehydrogenase. The polypeptide is C-1-tetrahydrofolate synthase, mitochondrial (ade9) (Schizosaccharomyces pombe (strain 972 / ATCC 24843) (Fission yeast)).